Consider the following 21-residue polypeptide: Nigrocin-2JDa (21 aa).

Cys-15 and Cys-21 are disulfide-bonded.

As to expression, expressed by the skin glands.

The protein resides in the secreted. Its function is as follows. Has antibacterial activity against E.coli ATCC 25992 (MIC=16 uM), E.coli CIB 84492 (MIC=16 uM), S.aureus ATCC 25923 (MIC=16 uM) and S.aureus CIB 85462 (MIC=8 uM). Has antifungal activity against C.albicans (MIC=63 uM). Has hemolytic activity against rabbit erythrocytes. This Odorrana jingdongensis (Jingdong frog) protein is Nigrocin-2JDa.